A 426-amino-acid chain; its full sequence is Monocarboxylate transporter 13 (426 aa).

Over 1–10 the chain is Cytoplasmic; sequence MAYRAEPPDG. The next 12 helical transmembrane spans lie at 11-31, 52-72, 83-103, 106-126, 139-159, 172-192, 221-241, 244-264, 283-303, 306-326, 338-358, and 374-394; these read GWGW…FGVL, VSWI…VGSA, VMTG…ATSL, LYLS…TPTL, LAMG…APLF, LLLV…LRPL, VALT…VAHL, LGWD…SDLV, LLML…VAEA, GLVA…PVAF, IYCG…LGAP, and FVVA…LPHF. At 395-426 the chain is on the cytoplasmic side; sequence FCFSAPTSKPQDLVTEALDTKVPLPEEGLGED.

Belongs to the major facilitator superfamily. Monocarboxylate porter (TC 2.A.1.13) family.

The protein resides in the golgi apparatus membrane. The protein localises to the cell membrane. Its function is as follows. Proton-linked monocarboxylate transporter. May catalyze the transport of monocarboxylates across the plasma membrane. This chain is Monocarboxylate transporter 13 (SLC16A13), found in Bos taurus (Bovine).